A 312-amino-acid polypeptide reads, in one-letter code: Porphobilinogen deaminase (312 aa).

Cysteine 241 bears the S-(dipyrrolylmethanemethyl)cysteine mark.

This sequence belongs to the HMBS family. Monomer. Dipyrromethane is required as a cofactor.

It carries out the reaction 4 porphobilinogen + H2O = hydroxymethylbilane + 4 NH4(+). The protein operates within porphyrin-containing compound metabolism; protoporphyrin-IX biosynthesis; coproporphyrinogen-III from 5-aminolevulinate: step 2/4. Functionally, tetrapolymerization of the monopyrrole PBG into the hydroxymethylbilane pre-uroporphyrinogen in several discrete steps. The sequence is that of Porphobilinogen deaminase from Aliarcobacter butzleri (strain RM4018) (Arcobacter butzleri).